The chain runs to 311 residues: Formimidoylglutamase (311 aa).

Residues histidine 130, aspartate 155, histidine 157, aspartate 159, cysteine 242, and aspartate 244 each coordinate Mn(2+).

The protein belongs to the arginase family. Mn(2+) is required as a cofactor.

The catalysed reaction is N-formimidoyl-L-glutamate + H2O = formamide + L-glutamate. It participates in amino-acid degradation; L-histidine degradation into L-glutamate; L-glutamate from N-formimidoyl-L-glutamate (hydrolase route): step 1/1. Its function is as follows. Catalyzes the conversion of N-formimidoyl-L-glutamate to L-glutamate and formamide. The chain is Formimidoylglutamase from Staphylococcus epidermidis (strain ATCC 35984 / DSM 28319 / BCRC 17069 / CCUG 31568 / BM 3577 / RP62A).